We begin with the raw amino-acid sequence, 155 residues long: Zinc finger HIT domain-containing protein 3 (155 aa).

Residues cysteine 11, cysteine 14, cysteine 22, cysteine 25, cysteine 30, cysteine 34, histidine 38, and cysteine 42 each coordinate Zn(2+). Residues 11–42 form an HIT-type zinc finger; sequence CVICLEKPKYRCPACRVPYCSVVCFRKHKEQC. Serine 80 carries the phosphoserine modification.

In terms of assembly, thyroid receptor interacting proteins (TRIPs) specifically interact with the ligand binding domain of the thyroid receptor (TR). Requires the presence of thyroid hormone for its interaction. Interacts with NUFIP1. Interacts (via HIT-type zinc finger) with the RUVBL1/RUVBL2 complex in the presence of ADP.

The protein localises to the cytoplasm. It is found in the nucleus. The protein is Zinc finger HIT domain-containing protein 3 (ZNHIT3) of Homo sapiens (Human).